We begin with the raw amino-acid sequence, 328 residues long: Beta-ketoacyl-[acyl-carrier-protein] synthase III (328 aa).

Catalysis depends on residues cysteine 122 and histidine 255. The segment at glutamine 256–arginine 260 is ACP-binding. Asparagine 285 is an active-site residue.

The protein belongs to the thiolase-like superfamily. FabH family. In terms of assembly, homodimer.

The protein resides in the cytoplasm. It catalyses the reaction malonyl-[ACP] + acetyl-CoA + H(+) = 3-oxobutanoyl-[ACP] + CO2 + CoA. The protein operates within lipid metabolism; fatty acid biosynthesis. Its function is as follows. Catalyzes the condensation reaction of fatty acid synthesis by the addition to an acyl acceptor of two carbons from malonyl-ACP. Catalyzes the first condensation reaction which initiates fatty acid synthesis and may therefore play a role in governing the total rate of fatty acid production. Possesses both acetoacetyl-ACP synthase and acetyl transacylase activities. Its substrate specificity determines the biosynthesis of branched-chain and/or straight-chain of fatty acids. The sequence is that of Beta-ketoacyl-[acyl-carrier-protein] synthase III from Bordetella pertussis (strain Tohama I / ATCC BAA-589 / NCTC 13251).